The following is a 143-amino-acid chain: Mannitol-specific phosphotransferase enzyme IIA component (143 aa).

A PTS EIIA type-2 domain is found at 2–142; sequence QVLAKENIKL…EDLIAIFNEV (141 aa). Catalysis depends on H62, which acts as the Tele-phosphohistidine intermediate. H62 is modified (phosphohistidine; by HPr). S74 bears the Phosphoserine mark.

It localises to the cytoplasm. Functionally, the phosphoenolpyruvate-dependent sugar phosphotransferase system (sugar PTS), a major carbohydrate active transport system, catalyzes the phosphorylation of incoming sugar substrates concomitantly with their translocation across the cell membrane. The enzyme II CmtAB PTS system is involved in D-mannitol transport. The protein is Mannitol-specific phosphotransferase enzyme IIA component (mtlF) of Bacillus subtilis (strain 168).